Reading from the N-terminus, the 88-residue chain is Cell division topological specificity factor (88 aa).

This sequence belongs to the MinE family.

Its function is as follows. Prevents the cell division inhibition by proteins MinC and MinD at internal division sites while permitting inhibition at polar sites. This ensures cell division at the proper site by restricting the formation of a division septum at the midpoint of the long axis of the cell. The chain is Cell division topological specificity factor from Psychromonas ingrahamii (strain DSM 17664 / CCUG 51855 / 37).